The sequence spans 166 residues: Interferon gamma (166 aa).

The first 23 residues, 1 to 23 (MNYTSYILAFQLCVILGSSGCYC), serve as a signal peptide directing secretion. Gln-24 carries the pyrrolidone carboxylic acid modification. 2 N-linked (GlcNAc...) asparagine glycosylation sites follow: Asn-39 and Asn-106.

It belongs to the type II (or gamma) interferon family. Homodimer. Interacts with IFNGR1 (via extracellular domain); this interaction promotes IFNGR1 dimerization. Released primarily from activated T lymphocytes.

It localises to the secreted. Functionally, type II interferon produced by immune cells such as T-cells and NK cells that plays crucial roles in antimicrobial, antiviral, and antitumor responses by activating effector immune cells and enhancing antigen presentation. Primarily signals through the JAK-STAT pathway after interaction with its receptor IFNGR1 to affect gene regulation. Upon IFNG binding, IFNGR1 intracellular domain opens out to allow association of downstream signaling components JAK2, JAK1 and STAT1, leading to STAT1 activation, nuclear translocation and transcription of IFNG-regulated genes. Many of the induced genes are transcription factors such as IRF1 that are able to further drive regulation of a next wave of transcription. Plays a role in class I antigen presentation pathway by inducing a replacement of catalytic proteasome subunits with immunoproteasome subunits. In turn, increases the quantity, quality, and repertoire of peptides for class I MHC loading. Increases the efficiency of peptide generation also by inducing the expression of activator PA28 that associates with the proteasome and alters its proteolytic cleavage preference. Up-regulates as well MHC II complexes on the cell surface by promoting expression of several key molecules such as cathepsins B/CTSB, H/CTSH, and L/CTSL. Participates in the regulation of hematopoietic stem cells during development and under homeostatic conditions by affecting their development, quiescence, and differentiation. In Camelus bactrianus (Bactrian camel), this protein is Interferon gamma (IFNG).